We begin with the raw amino-acid sequence, 346 residues long: Phosphoribosylformylglycinamidine cyclo-ligase (346 aa).

The protein belongs to the AIR synthase family.

The protein localises to the cytoplasm. The enzyme catalyses 2-formamido-N(1)-(5-O-phospho-beta-D-ribosyl)acetamidine + ATP = 5-amino-1-(5-phospho-beta-D-ribosyl)imidazole + ADP + phosphate + H(+). The protein operates within purine metabolism; IMP biosynthesis via de novo pathway; 5-amino-1-(5-phospho-D-ribosyl)imidazole from N(2)-formyl-N(1)-(5-phospho-D-ribosyl)glycinamide: step 2/2. This Geobacillus kaustophilus (strain HTA426) protein is Phosphoribosylformylglycinamidine cyclo-ligase.